We begin with the raw amino-acid sequence, 520 residues long: RING-type E3 ubiquitin-protein ligase PPIL2 (520 aa).

Residues 35 to 108 form the U-box domain; the sequence is RRLPFDHCSL…GKYHCPVLFT (74 aa). Residues 197–217 are a coiled coil; that stretch reads LKNTNAETRETLQELYKEFKG. Lys216 is covalently cross-linked (Glycyl lysine isopeptide (Lys-Gly) (interchain with G-Cter in SUMO2)). Residues 278-433 enclose the PPIase cyclophilin-type domain; that stretch reads KKGYVRLHTN…EEIRIDATTV (156 aa). Residues 456–520 are disordered; sequence APETKVKSSQ…SRGFGDFSSW (65 aa). A compositionally biased stretch (low complexity) spans 463 to 474; that stretch reads SSQPQAGSQGPQ. Ser470 carries the phosphoserine modification. The residue at position 482 (Lys482) is an N6-acetyllysine.

This sequence belongs to the cyclophilin-type PPIase family. PPIL2 subfamily. Component of the minor spliceosome, which splices U12-type introns. Within this complex, interacts with PRPF8/PRP8, EFTUD2/SNU114 and PLRG1. Interacts with isoform 2 of BSG. Interacts (via the PPIase cyclophilin-type domain) with CRNKL1; they may form a trimeric complex with HSP90. Highest expression in thymus, pancreas and testis. Also detected in heart, placenta, lung, liver, skeletal muscle, kidney, spleen, prostate, ovary, small intestine and colon. Poorly detected in brain and leukocytes. Strong protein expression in lymph node (cortical, paracortical and medullar regions), thyroid (follicular epithelial cells), testis (developing spermatozoa), stomach (cells lining the gastric pit), pancreas, kidney (proximal and distal-tubule cells and collecting duct cells but not in glomeruli), endometrium and colon (goblet cells). Moderate protein expression in spleen, prostate (epithelium and squamous cell carcinomas), placenta and adrenal gland. Weak protein expression in liver, heart, breast, ovary, and lung. No protein expression in brain and bladder. High protein expression in most lymphomas and melanomas.

The protein localises to the nucleus. It carries out the reaction S-ubiquitinyl-[E2 ubiquitin-conjugating enzyme]-L-cysteine + [acceptor protein]-L-lysine = [E2 ubiquitin-conjugating enzyme]-L-cysteine + N(6)-ubiquitinyl-[acceptor protein]-L-lysine.. It functions in the pathway protein modification; protein ubiquitination. Has a ubiquitin-protein ligase activity acting as an E3 ubiquitin protein ligase or as an ubiquitin-ubiquitin ligase promoting elongation of ubiquitin chains on substrates. By mediating 'Lys-48'-linked polyubiquitination of proteins could target them for proteasomal degradation. May also function as a chaperone, playing a role in transport to the cell membrane of BSG/Basigin for instance. Probable inactive PPIase with no peptidyl-prolyl cis-trans isomerase activity. As a component of the minor spliceosome, involved in the splicing of U12-type introns in pre-mRNAs. In Homo sapiens (Human), this protein is RING-type E3 ubiquitin-protein ligase PPIL2.